The chain runs to 300 residues: ETS homologous factor (300 aa).

The region spanning 29–115 (STCNVSSGFF…SNLQHLKWNG (87 aa)) is the PNT domain. The interval 183-202 (ESPDMKKEQDPPAKCHTKKH) is disordered. The span at 185-195 (PDMKKEQDPPA) shows a compositional bias: basic and acidic residues. The ETS DNA-binding region spans 207–289 (THLWEFIRDI…DGRRLVYKFG (83 aa)).

Belongs to the ETS family.

The protein resides in the nucleus. Its function is as follows. Transcriptional activator that may play a role in regulating epithelial cell differentiation and proliferation. May act as a repressor for a specific subset of ETS/AP-1-responsive genes, and as a modulator of the nuclear response to mitogen-activated protein kinase signaling cascades. Binds to DNA sequences containing the consensus nucleotide core sequence GGAA. Involved in regulation of TNFRSF10B/DR5 expression through Ets-binding sequences on the TNFRSF10B/DR5 promoter. This chain is ETS homologous factor (EHF), found in Pan troglodytes (Chimpanzee).